The chain runs to 244 residues: EKC/KEOPS complex subunit Tp53rkb (244 aa).

In terms of domain architecture, Protein kinase spans 24 to 244 (LSGLELVQQG…LRGRKRSMVG (221 aa)). At S25 the chain carries Phosphoserine. ATP is bound by residues 30-38 (VQQGAEARV) and K51. A Nuclear localization signal motif is present at residues 69 to 86 (RRRTVQEARALLRCRRAG). The Proton acceptor role is filled by D153.

The protein belongs to the protein kinase superfamily. BUD32 family. As to quaternary structure, component of the EKC/KEOPS complex composed of at least GON7, TP53RK, TPRKB, OSGEP and LAGE3; the whole complex dimerizes.

It is found in the nucleus. It carries out the reaction L-seryl-[protein] + ATP = O-phospho-L-seryl-[protein] + ADP + H(+). The enzyme catalyses L-threonyl-[protein] + ATP = O-phospho-L-threonyl-[protein] + ADP + H(+). In terms of biological role, component of the EKC/KEOPS complex that is required for the formation of a threonylcarbamoyl group on adenosine at position 37 (t(6)A37) in tRNAs that read codons beginning with adenine. The complex is probably involved in the transfer of the threonylcarbamoyl moiety of threonylcarbamoyl-AMP (TC-AMP) to the N6 group of A37. TP53RK has ATPase activity in the context of the EKC/KEOPS complex and likely plays a supporting role to the catalytic subunit OSGEP. Atypical protein kinase that phosphorylates 'Ser-15' of p53/TP53 protein and may therefore participate in its activation. This is EKC/KEOPS complex subunit Tp53rkb from Mus musculus (Mouse).